Reading from the N-terminus, the 283-residue chain is 4-diphosphocytidyl-2-C-methyl-D-erythritol kinase (283 aa).

Residue Lys10 is part of the active site. Residue 95–105 participates in ATP binding; that stretch reads PVAAGLGGGSS. Asp137 is a catalytic residue.

This sequence belongs to the GHMP kinase family. IspE subfamily.

It catalyses the reaction 4-CDP-2-C-methyl-D-erythritol + ATP = 4-CDP-2-C-methyl-D-erythritol 2-phosphate + ADP + H(+). Its pathway is isoprenoid biosynthesis; isopentenyl diphosphate biosynthesis via DXP pathway; isopentenyl diphosphate from 1-deoxy-D-xylulose 5-phosphate: step 3/6. Functionally, catalyzes the phosphorylation of the position 2 hydroxy group of 4-diphosphocytidyl-2C-methyl-D-erythritol. This is 4-diphosphocytidyl-2-C-methyl-D-erythritol kinase from Limosilactobacillus reuteri (strain DSM 20016) (Lactobacillus reuteri).